The chain runs to 635 residues: Chaperone protein DnaK (635 aa).

Threonine 198 is subject to Phosphothreonine; by autocatalysis. Residues 597 to 635 (LYEQDQANNERHDTPETEKAEGDNVVDAEFQEIDDQDKK) are disordered. The segment covering 604–618 (NNERHDTPETEKAEG) has biased composition (basic and acidic residues). Acidic residues predominate over residues 620 to 635 (NVVDAEFQEIDDQDKK).

Belongs to the heat shock protein 70 family.

In terms of biological role, acts as a chaperone. The sequence is that of Chaperone protein DnaK from Zymomonas mobilis subsp. mobilis (strain ATCC 31821 / ZM4 / CP4).